Consider the following 60-residue polypeptide: Large ribosomal subunit protein uL30 (60 aa).

This sequence belongs to the universal ribosomal protein uL30 family. As to quaternary structure, part of the 50S ribosomal subunit.

The polypeptide is Large ribosomal subunit protein uL30 (Lactiplantibacillus plantarum (strain ATCC BAA-793 / NCIMB 8826 / WCFS1) (Lactobacillus plantarum)).